We begin with the raw amino-acid sequence, 239 residues long: MGRKWNNIKDKKASKDANTSRIYAKFGREIYVAAKQGEPDPESNQALRVVLERAKTYNVPRTIIDRAVEKAKGGSEENYDELRYEGFGPNGAMVIVDTLTNNVNRTAADVRAAFSKNSGNMGVNGSVAYMFDATAVIGLEGKTSDEVLEILMEADVDARDILEEEDSVIVYAEPDQFHAVQSALKGAGVEEFTVAELTMLAQSDVTLPEDAQAQFEKMVDALEDLEDVQQVYHNVDLGE.

Belongs to the TACO1 family. YeeN subfamily.

It is found in the cytoplasm. The chain is Probable transcriptional regulatory protein BC_0539 from Bacillus cereus (strain ATCC 14579 / DSM 31 / CCUG 7414 / JCM 2152 / NBRC 15305 / NCIMB 9373 / NCTC 2599 / NRRL B-3711).